Here is a 310-residue protein sequence, read N- to C-terminus: Ribosomal protein uL3 glutamine methyltransferase (310 aa).

It belongs to the protein N5-glutamine methyltransferase family. PrmB subfamily.

The catalysed reaction is L-glutaminyl-[ribosomal protein uL3] + S-adenosyl-L-methionine = N(5)-methyl-L-glutaminyl-[ribosomal protein uL3] + S-adenosyl-L-homocysteine + H(+). Its function is as follows. Methylates large ribosomal subunit protein uL3 on a specific glutamine residue. This Vibrio anguillarum (strain ATCC 68554 / 775) (Listonella anguillarum) protein is Ribosomal protein uL3 glutamine methyltransferase.